The following is a 986-amino-acid chain: Replication factor C subunit 1 (986 aa).

The disordered stretch occupies residues 1 to 95 (MQRGIDSFFK…ALSKLKRHVD (95 aa)). Residues serine 18, serine 28, serine 40, serine 41, serine 48, and serine 58 each carry the phosphoserine modification. At threonine 60 the chain carries Phosphothreonine. A phosphoserine mark is found at serine 62 and serine 63. Threonine 71 carries the phosphothreonine modification. Phosphoserine is present on residues serine 128, serine 137, serine 149, serine 154, serine 156, serine 164, and serine 194. The span at 136-147 (ESIKEAAPEKKV) shows a compositional bias: basic and acidic residues. Disordered regions lie at residues 136–203 (ESIK…ERHE) and 317–388 (KQVK…NDVP). A Phosphothreonine modification is found at threonine 197. Residues 232–322 (GSPDCLSGLT…SGIAKQVKEE (91 aa)) form the BRCT domain. Composition is skewed to basic and acidic residues over residues 317-364 (KQVK…EKHD) and 370-385 (VKEE…DKLN). Position 487–494 (487–494 (GPPGIGKT)) interacts with ATP. The tract at residues 913-986 (SEAAGADDDY…ASKSKAKAKK (74 aa)) is disordered. Positions 917-932 (GADDDYLDEGPGEEDG) are enriched in acidic residues. 2 positions are modified to phosphoserine: serine 938 and serine 939. The short motif at 955–959 (KAKKR) is the Nuclear localization signal element. Residues 962–979 (TSKASGGSKKATSSTASK) show a composition bias toward low complexity.

The protein belongs to the activator 1 large subunit family. As to quaternary structure, interacts with C-terminus of PCNA.

It is found in the nucleus. Its function is as follows. The elongation of primed DNA templates by DNA polymerase delta and epsilon requires the action of the accessory proteins proliferating cell nuclear antigen (PCNA) and activator 1. This subunit binds to the primer-template junction. The chain is Replication factor C subunit 1 (Gnf1) from Drosophila melanogaster (Fruit fly).